Consider the following 291-residue polypeptide: Nucleotide-binding protein Lm4b_02443 (291 aa).

13–20 (GMSGAGKT) is an ATP binding site. 63-66 (DLRG) contributes to the GTP binding site.

It belongs to the RapZ-like family.

Its function is as follows. Displays ATPase and GTPase activities. In Listeria monocytogenes serotype 4b (strain CLIP80459), this protein is Nucleotide-binding protein Lm4b_02443.